The following is a 221-amino-acid chain: Protein FixW (221 aa).

Residues 5–156 (LNLGSPAPPI…LPKVIDGNWR (152 aa)) enclose the Thioredoxin domain. A disulfide bond links Cys-43 and Cys-46.

It belongs to the thioredoxin family.

This is Protein FixW (fixW) from Rhizobium leguminosarum.